The sequence spans 611 residues: Histone acetyltransferase KAT7 (611 aa).

The segment at 1-173 (MPRRKRNAGS…SDLSHRPKRR (173 aa)) is disordered. Ser10 is subject to Phosphoserine. Residues 42 to 57 (VTRSSARLSQSSQDSS) are compositionally biased toward low complexity. A phosphoserine; by ATR mark is found at Ser50 and Ser53. The residue at position 57 (Ser57) is a Phosphoserine; by PLK1. Ser64 carries the post-translational modification Phosphoserine. A phosphothreonine; by CDK1 mark is found at Thr85 and Thr88. Polar residues predominate over residues 96-105 (QTRSSGSETE). A Phosphoserine modification is found at Ser102. A Phosphothreonine modification is found at Thr104. The span at 110 to 125 (FSDRETKNTADHDESP) shows a compositional bias: basic and acidic residues. Residues Ser111 and Ser124 each carry the phosphoserine modification. Thr128 carries the phosphothreonine modification. Positions 134–145 (PSSESDIDISSP) are enriched in low complexity. The segment covering 148–168 (SHDESIAKDMSLKDSGSDLSH) has biased composition (basic and acidic residues). Ser158, Ser162, Ser164, and Ser178 each carry phosphoserine. The CCHHC-type zinc finger occupies 176 to 219 (HESYNFNMKCPTPGCNSLGHLTGKHERHFSISGCPLYHNLSADE). N6-acetyllysine is present on residues Lys199 and Lys277. Lys323 is covalently cross-linked (Glycyl lysine isopeptide (Lys-Gly) (interchain with G-Cter in SUMO2)). Residues 332-607 (EGSNMIKTIA…MDPSCLKWTP (276 aa)) enclose the MYST-type HAT domain. Residue Lys338 forms a Glycyl lysine isopeptide (Lys-Gly) (interchain with G-Cter in ubiquitin) linkage. Residues 365 to 390 (LYMCEFCLKYMKSQTILRRHMAKCVW) form a C2HC MYST-type zinc finger. 4 residues coordinate Zn(2+): Cys368, Cys371, His384, and Cys388. Position 432 is an N6-acetyllysine; by autocatalysis (Lys432). Residues 475-477 (ILT) and 483-488 (RQGYGK) each bind acetyl-CoA. Ser506 is modified (phosphoserine). The active-site Proton donor/acceptor is Glu508. Acetyl-CoA contacts are provided by Ser512 and Ser521.

It belongs to the MYST (SAS/MOZ) family. Component of the HBO1 complex composed of KAT7/HBO1, MEAF6, ING4 or ING5, and one scaffold subunit: complexes containing BRPF scaffold (BRPF1, BRD1/BRPF2 or BRPF3) direct KAT7/HBO1 specificity towards H3K14ac, while complexes containing JADE scaffold (JADE1, JADE2 and JADE3) mediate acetylation of histone H4. Interacts with MCM2 and ORC1. Interacts with the androgen receptor (AR); in the presence of dihydrotestosterone. Interacts with CDT1. Interacts with MAP2K1 and CUL1. Interacts with p53/TP53; leading to inhibit histone acetyltransferase activity. Interacts with MIS18BP1. Phosphorylated at Ser-50 and Ser-53 by ATR in response to DNA damage, promoting its ubiquitination by the CRL4(DDB2) complex and subsequent degradation. Phosphorylation at Ser-50 and Ser-53 by ATR in response to ultraviolet-induced DNA, promotes localization to DNA damage sites. Phosphorylation at Ser-57 by PLK1 during mitosis seems important for prereplicative complex formation and DNA replication licensing, and requires prior phosphorylation at Thr-85 and Thr-88 by CDK1. Phosphorylated by MAP2K1, which accelerates its degradation. Post-translationally, ubiquitinated at Lys-338, leading to proteasomal degradation. Ubiquitinated by the CRL4(DDB2) complex following phosphorylation by ATR, leading to its subsequent degradation. In terms of processing, autoacetylation at Lys-432 is required for proper function. Ubiquitously expressed, with highest levels in testis.

Its subcellular location is the nucleus. The protein resides in the chromosome. The protein localises to the centromere. It localises to the cytoplasm. It is found in the cytosol. The enzyme catalyses L-lysyl-[histone] + acetyl-CoA = N(6)-acetyl-L-lysyl-[histone] + CoA + H(+). Histone acetyltransferase activity is inhibited by GMNN in the context of a complex with CDT1, inhibiting histone H4 acetylation and DNA replication licensing. Selectively inhibited by WM-3835 (N'-(4-fluoro-5-methyl-[1,1'-biphenyl]-3-carbonyl)-3- hydroxybenzenesulfonohydrazide) inhibitor. Catalytic subunit of histone acetyltransferase HBO1 complexes, which specifically mediate acetylation of histone H3 at 'Lys-14' (H3K14ac), thereby regulating various processes, such as gene transcription, protein ubiquitination, immune regulation, stem cell pluripotent and self-renewal maintenance and embryonic development. Some complexes also catalyze acetylation of histone H4 at 'Lys-5', 'Lys-8' and 'Lys-12' (H4K5ac, H4K8ac and H4K12ac, respectively), regulating DNA replication initiation, regulating DNA replication initiation. Specificity of the HBO1 complexes is determined by the scaffold subunit: complexes containing BRPF scaffold (BRPF1, BRD1/BRPF2 or BRPF3) direct KAT7/HBO1 specificity towards H3K14ac, while complexes containing JADE (JADE1, JADE2 and JADE3) scaffold direct KAT7/HBO1 specificity towards histone H4. H3K14ac promotes transcriptional elongation by facilitating the processivity of RNA polymerase II. Acts as a key regulator of hematopoiesis by forming a complex with BRD1/BRPF2, directing KAT7/HBO1 specificity towards H3K14ac and promoting erythroid differentiation. H3K14ac is also required for T-cell development. KAT7/HBO1-mediated acetylation facilitates two consecutive steps, licensing and activation, in DNA replication initiation: H3K14ac facilitates the activation of replication origins, and histone H4 acetylation (H4K5ac, H4K8ac and H4K12ac) facilitates chromatin loading of MCM complexes, promoting DNA replication licensing. Acts as a positive regulator of centromeric CENPA assembly: recruited to centromeres and mediates histone acetylation, thereby preventing centromere inactivation mediated by SUV39H1, possibly by increasing histone turnover/exchange. Involved in nucleotide excision repair: phosphorylation by ATR in response to ultraviolet irradiation promotes its localization to DNA damage sites, where it mediates histone acetylation to facilitate recruitment of XPC at the damaged DNA sites. Acts as an inhibitor of NF-kappa-B independently of its histone acetyltransferase activity. In terms of biological role, plays a central role in the maintenance of leukemia stem cells in acute myeloid leukemia (AML). Acts by mediating acetylation of histone H3 at 'Lys-14' (H3K14ac), thereby facilitating the processivity of RNA polymerase II to maintain the high expression of key genes, such as HOXA9 and HOXA10 that help to sustain the functional properties of leukemia stem cells. This chain is Histone acetyltransferase KAT7, found in Homo sapiens (Human).